The primary structure comprises 404 residues: Tryptophan synthase beta chain (404 aa).

Lys94 carries the N6-(pyridoxal phosphate)lysine modification.

This sequence belongs to the TrpB family. In terms of assembly, tetramer of two alpha and two beta chains. Pyridoxal 5'-phosphate serves as cofactor.

The catalysed reaction is (1S,2R)-1-C-(indol-3-yl)glycerol 3-phosphate + L-serine = D-glyceraldehyde 3-phosphate + L-tryptophan + H2O. It participates in amino-acid biosynthesis; L-tryptophan biosynthesis; L-tryptophan from chorismate: step 5/5. The beta subunit is responsible for the synthesis of L-tryptophan from indole and L-serine. The protein is Tryptophan synthase beta chain of Staphylococcus aureus (strain JH1).